The sequence spans 244 residues: UPF0280 protein Msp_1322 (244 aa).

The protein belongs to the UPF0280 family.

The sequence is that of UPF0280 protein Msp_1322 from Methanosphaera stadtmanae (strain ATCC 43021 / DSM 3091 / JCM 11832 / MCB-3).